A 620-amino-acid chain; its full sequence is bZIP transcription factor 49 (620 aa).

At 1-287 (MAEPVLEDTY…VAKVKKFKKV (287 aa)) the chain is on the cytoplasmic side. Polar residues predominate over residues 109 to 135 (SSCYNRESPTDSDFSGTSQSLSFSGQD). Residues 109–155 (SSCYNRESPTDSDFSGTSQSLSFSGQDSAKRKTEIEEDSSDESRRLG) are disordered. Residues 172-235 (EKKKNVRLVR…VTLRQQMGTR (64 aa)) enclose the bZIP domain. Positions 173 to 205 (KKKNVRLVRNRESAHLSRQRKKHYVEELEDKVK) are basic motif. The segment at 211-218 (ISELSSKM) is leucine-zipper. Residues 288–308 (ASFSVFGFLFCMFLFGALVNI) form a helical membrane-spanning segment. Topologically, residues 309 to 620 (SYGEYKSNYV…RPDVPHLMTS (312 aa)) are lumenal. Disordered regions lie at residues 343–364 (DSDQGVGRNVSETENLGPPRNS), 398–460 (ARDS…SNDQ), and 505–557 (PASP…RETK). Residues asparagine 351 and asparagine 363 are each glycosylated (N-linked (GlcNAc...) asparagine). Polar residues predominate over residues 352-364 (VSETENLGPPRNS). 2 stretches are compositionally biased toward basic and acidic residues: residues 398–409 (ARDSETKNEEGK) and 432–441 (RTRDVSKHLY). Composition is skewed to polar residues over residues 447–460 (GLSSSGSDDASNDQ) and 508–519 (PHTQQCKNTSDT). Residue asparagine 515 is glycosylated (N-linked (GlcNAc...) asparagine). The short motif at 526–529 (RRIL) is the RRIL cleavage motif element. 2 N-linked (GlcNAc...) asparagine glycosylation sites follow: asparagine 539 and asparagine 546. The span at 540–557 (LTKEDHNSSSKDKFRETK) shows a compositional bias: basic and acidic residues.

This sequence belongs to the bZIP family. As to quaternary structure, interacts with BZIP28.

Its subcellular location is the endoplasmic reticulum membrane. It localises to the nucleus. Functionally, transcriptional activator involved in stress responses. This chain is bZIP transcription factor 49, found in Arabidopsis thaliana (Mouse-ear cress).